The primary structure comprises 440 residues: Adenylosuccinate synthetase (440 aa).

Residues 13-19 (GDEGKGK) and 41-43 (GHT) each bind GTP. Asp14 acts as the Proton acceptor in catalysis. Mg(2+) is bound by residues Asp14 and Gly41. IMP contacts are provided by residues 14 to 17 (DEGK), 39 to 42 (NAGH), Thr135, Arg149, Gln230, Thr245, and Arg313. The Proton donor role is filled by His42. 309-315 (TVTKRKR) contributes to the substrate binding site. Residues Arg315, 341–343 (KLD), and 423–425 (STG) each bind GTP.

The protein belongs to the adenylosuccinate synthetase family. As to quaternary structure, homodimer. Mg(2+) is required as a cofactor.

Its subcellular location is the cytoplasm. The catalysed reaction is IMP + L-aspartate + GTP = N(6)-(1,2-dicarboxyethyl)-AMP + GDP + phosphate + 2 H(+). The protein operates within purine metabolism; AMP biosynthesis via de novo pathway; AMP from IMP: step 1/2. Its function is as follows. Plays an important role in the de novo pathway of purine nucleotide biosynthesis. Catalyzes the first committed step in the biosynthesis of AMP from IMP. The sequence is that of Adenylosuccinate synthetase from Methylobacillus flagellatus (strain ATCC 51484 / DSM 6875 / VKM B-1610 / KT).